A 477-amino-acid polypeptide reads, in one-letter code: MSPQTETKASVGFKAGVKDYKLTYYTPEYETKDTDILAAFRVTPQPGVPPEEAGAAVAAESSTGTWTTVWTDGLTSLDRYKGRCYGIEPVPGEENQYIAYVAYPLDLFEEGSVTNMFTSIVGNVFGFKALRALRLEDLRIPTAYVKTFQGPRHGIQVERDKLNKYGRPLLGCTIKPKLGLSAKNYGRAVYECLRGGLDFTKDDENVNSQPFMRWRDRFLFCAEAIFKSQAETGEIKGHYLNATAGTCEEMMKRAIFARELGVPIVMHDYLTGGFTANTSLAHYCRDNGLLLHIHRAMHAVIDRQKNHGIHFRVLAKALRMSGGDHIHSGTVVGKLEGEREITLGFVDLLRDDFIEKDRSRGIYFTQDWVSLPGVLPVASGGIHVWHMPALTEIFGDDSVLQFGGGTLGHPWGNAPGAVANRVALEACVQARNEGRDLATEGNEIIREAAKWSPELAAACEVWKEIKFEFQAMDTLDK.

The propeptide occupies 1–2 (MS). At proline 3 the chain carries N-acetylproline. The residue at position 14 (lysine 14) is an N6,N6,N6-trimethyllysine. The substrate site is built by asparagine 123 and threonine 173. Lysine 175 functions as the Proton acceptor in the catalytic mechanism. Substrate is bound at residue lysine 177. Mg(2+) is bound by residues lysine 201, aspartate 203, and glutamate 204. Lysine 201 is subject to N6-carboxylysine. The active-site Proton acceptor is the histidine 294. Substrate is bound by residues arginine 295, histidine 327, and serine 379.

This sequence belongs to the RuBisCO large chain family. Type I subfamily. In terms of assembly, heterohexadecamer of 8 large chains and 8 small chains; disulfide-linked. The disulfide link is formed within the large subunit homodimers. Requires Mg(2+) as cofactor. Post-translationally, the disulfide bond which can form in the large chain dimeric partners within the hexadecamer appears to be associated with oxidative stress and protein turnover.

The protein resides in the plastid. The protein localises to the chloroplast. The enzyme catalyses 2 (2R)-3-phosphoglycerate + 2 H(+) = D-ribulose 1,5-bisphosphate + CO2 + H2O. The catalysed reaction is D-ribulose 1,5-bisphosphate + O2 = 2-phosphoglycolate + (2R)-3-phosphoglycerate + 2 H(+). Its function is as follows. RuBisCO catalyzes two reactions: the carboxylation of D-ribulose 1,5-bisphosphate, the primary event in carbon dioxide fixation, as well as the oxidative fragmentation of the pentose substrate in the photorespiration process. Both reactions occur simultaneously and in competition at the same active site. The sequence is that of Ribulose bisphosphate carboxylase large chain from Cichorium intybus (Chicory).